A 405-amino-acid chain; its full sequence is S-adenosylmethionine synthase (405 aa).

141–146 provides a ligand contact to ATP; that stretch reads GQGSVD.

Belongs to the AdoMet synthase 2 family. Mg(2+) is required as a cofactor.

The catalysed reaction is L-methionine + ATP + H2O = S-adenosyl-L-methionine + phosphate + diphosphate. Its pathway is amino-acid biosynthesis; S-adenosyl-L-methionine biosynthesis; S-adenosyl-L-methionine from L-methionine: step 1/1. Catalyzes the formation of S-adenosylmethionine from methionine and ATP. The sequence is that of S-adenosylmethionine synthase from Methanococcus maripaludis (strain C5 / ATCC BAA-1333).